A 575-amino-acid polypeptide reads, in one-letter code: DNA-directed RNA polymerase subunit beta' (575 aa).

Positions 64, 66, 85, and 88 each coordinate Zn(2+). Mg(2+)-binding residues include Asp-440, Asp-442, and Asp-444.

This sequence belongs to the RNA polymerase beta' chain family. RpoC1 subfamily. As to quaternary structure, in plastids the minimal PEP RNA polymerase catalytic core is composed of four subunits: alpha, beta, beta', and beta''. When a (nuclear-encoded) sigma factor is associated with the core the holoenzyme is formed, which can initiate transcription. Mg(2+) serves as cofactor. The cofactor is Zn(2+).

It is found in the plastid. It catalyses the reaction RNA(n) + a ribonucleoside 5'-triphosphate = RNA(n+1) + diphosphate. Its function is as follows. DNA-dependent RNA polymerase catalyzes the transcription of DNA into RNA using the four ribonucleoside triphosphates as substrates. The protein is DNA-directed RNA polymerase subunit beta' of Euglena longa (Euglenophycean alga).